Reading from the N-terminus, the 218-residue chain is Cytochrome b6 (218 aa).

A helical membrane pass occupies residues 35 to 55 (IFYCLGGITLVCFLIQFATGF). Position 38 (C38) interacts with heme c. Heme b-binding residues include H89 and H103. 3 helical membrane-spanning segments follow: residues 93 to 113 (ASMM…TGGF), 119 to 139 (LTWV…VTGY), and 189 to 209 (LHTF…FLMI). Heme b is bound by residues H190 and H205.

This sequence belongs to the cytochrome b family. PetB subfamily. As to quaternary structure, the 4 large subunits of the cytochrome b6-f complex are cytochrome b6, subunit IV (17 kDa polypeptide, PetD), cytochrome f and the Rieske protein, while the 4 small subunits are PetG, PetL, PetM and PetN. The complex functions as a dimer. It depends on heme b as a cofactor. The cofactor is heme c.

The protein resides in the cellular thylakoid membrane. Component of the cytochrome b6-f complex, which mediates electron transfer between photosystem II (PSII) and photosystem I (PSI), cyclic electron flow around PSI, and state transitions. This chain is Cytochrome b6, found in Synechococcus sp. (strain RCC307).